A 431-amino-acid chain; its full sequence is Lipid storage droplets surface-binding protein 1 (431 aa).

The segment at 397 to 431 is disordered; sequence KVTGSDGGNSNHRSSRRRQDPNHYSATHNNINGVY. A compositionally biased stretch (polar residues) spans 418-431; the sequence is NHYSATHNNINGVY.

This sequence belongs to the perilipin family.

The protein localises to the cytoplasm. It localises to the lipid droplet. Functionally, required for normal deposition of neutral lipids in the oocyte. In Drosophila melanogaster (Fruit fly), this protein is Lipid storage droplets surface-binding protein 1.